The primary structure comprises 757 residues: Transmembrane channel-like protein 1 (757 aa).

Positions 1-74 (MLQIQVEEKE…RRRLRRGAEE (74 aa)) are disordered. Residues 1–176 (MLQIQVEEKE…KIKAIESQFG (176 aa)) lie on the Cytoplasmic side of the membrane. The segment covering 8-23 (EKEEDTEESSSEEEED) has biased composition (acidic residues). Position 30 is a phosphoserine (Ser-30). Thr-38 is modified (phosphothreonine). Over residues 43 to 54 (NEDDPEPEPEDE) the composition is skewed to acidic residues. The segment at 81–130 (EELERLKALLDENRQMIATVKCKPWKMEKKIEVLKEAKKFVSENEGALGK) is required for interaction with CIB2. Ser-122 is subject to Phosphoserine. A helical membrane pass occupies residues 177–214 (SSVASYFLFLRWMYGVNMVLFVLTFSLIMLPEYLWGLP). Over 215–265 (YGSLPRKTVPRAEEASAANFGVLYDFNGLAQYSVLFYGYYDNKRTIGWLNF) the chain is Extracellular. Residues 266-297 (RLPLSYFLVGIMCIGYSFLVVLKAMTKNIGDD) form a helical membrane-spanning segment. A required for interaction with CIB2 region spans residues 298-352 (GGGDDNTFNFSWKVFCSWDYLIGNPETADNKFNSITMNFKEAIIEERAAQVEENI). Topologically, residues 298 to 353 (GGGDDNTFNFSWKVFCSWDYLIGNPETADNKFNSITMNFKEAIIEERAAQVEENIH) are cytoplasmic. At Ser-308 the chain carries Phosphoserine. The helical transmembrane segment at 354-384 (LIRFLRFLANFFVFLTLGASGYLIFWAVKRS) threads the bilayer. The Extracellular segment spans residues 385 to 396 (QEFAQQDPDTLG). Phosphothreonine is present on Thr-394. The chain crosses the membrane as a helical span at residues 397–424 (WWEKNEMNMVMSLLGMFCPTLFDLFAEL). The Cytoplasmic portion of the chain corresponds to 425–428 (EDYH). The chain crosses the membrane as a helical span at residues 429–463 (PLIALKWLLGRIFALLLGNLYVFILALMDEINNKI). Residues 464-512 (EEEKLVKANITLWEANMIKAYNESLSGLSGNTTGAPFFVHPADVPRGPC) lie on the Extracellular side of the membrane. The helical transmembrane segment at 513–550 (WETMVGQEFVRLTVSDVLTTYVTILIGDFLRACFVRFC) threads the bilayer. Topologically, residues 551–569 (NYCWCWDLEYGYPSYTEFD) are cytoplasmic. A helical membrane pass occupies residues 570–590 (ISGNVLALIFNQGMIWMGSFF). Residues 591 to 593 (APS) are Extracellular-facing. A helical transmembrane segment spans residues 594 to 616 (LPGINILRLHTSMYFQCWAVMCC). Topologically, residues 617-630 (NVPEARVFKASRSN) are cytoplasmic. Residues 631 to 654 (NFYLGMLLLILFLSTMPVLYMIVS) traverse the membrane as a helical segment. Topologically, residues 655 to 697 (LPPSFDCGPFSGKNRMFEVIGETLEHDFPSWMAKILRQLSNPG) are extracellular. The chain crosses the membrane as a helical span at residues 698 to 731 (LVIAVILVMVLTIYYLNATAKGQKAANLDLKKKM). The Cytoplasmic segment spans residues 732-757 (KQQALENKMRNKKMAAARAAAAAGGQ).

The protein belongs to the TMC family. Forms the MET channel composed of TMC dimer (TMC1 or TMC2), TMIE, TOMT, CIB (CIB2 or CIB3), LHFPL5 and PCDH15. Interacts with PIEZO1 and PIEZO2; the interaction may be part of the MET complex. The interaction of TMC1 and TMC2 with TOMT is required for the transportation of TMC1/2 into the stereocilia of hair cells. Interacts (via N-terminus) with both isoforms CD1 and CD3 of PCDH15. Can form a heterodimer with TMC2, TMC5 or TMC7. As to expression, detected in cochlear inner and outer hair cells and in neurosensory epithelia of the vestibular end organs. Also expressed in cortex, cerebellum, eye, colon, ovary and testis.

The protein localises to the cell membrane. The catalysed reaction is Ca(2+)(in) = Ca(2+)(out). Pore-forming subunit of the mechanotransducer (MET) non-selective cation channel complex located at the tips of stereocilia of cochlear hair cells and that mediates sensory transduction in the auditory system. The MET complex is composed of two dimeric pore-forming ion-conducting transmembrane TMC (TMC1 or TMC2) subunits, several auxiliary proteins including LHFPL5, TMIE, CIB2/3 and TOMT, the tip-link PCDH15, and possibly the PIEZO subunits. MET channel is activated by tension in the tip-link extending from the side wall of one stereocilium to the tip of the adjacent shorter stereocilium, where the channel is located. TMC1 MET channel is highly permeable to calcium and likely transports monovalent cations. Also involved in vestibular hair cells transduction current. The polypeptide is Transmembrane channel-like protein 1 (Mus musculus (Mouse)).